The primary structure comprises 146 residues: Hemoglobin subunit beta (146 aa).

Val-1 carries the post-translational modification N-acetylvaline. In terms of domain architecture, Globin spans 2–146 (HLTNEEKTAV…VATALAHKYH (145 aa)). Ser-44 is subject to Phosphoserine. The residue at position 59 (Lys-59) is an N6-acetyllysine. A heme b-binding site is contributed by His-63. Lys-82 is modified (N6-acetyllysine). Position 92 (His-92) interacts with heme b. Residue Cys-93 is modified to S-nitrosocysteine. At Lys-144 the chain carries N6-acetyllysine.

The protein belongs to the globin family. As to quaternary structure, heterotetramer of two alpha chains and two beta chains. As to expression, red blood cells.

Functionally, involved in oxygen transport from the lung to the various peripheral tissues. The protein is Hemoglobin subunit beta (HBB) of Lyroderma lyra (Greater Asian false-vampire bat).